Reading from the N-terminus, the 397-residue chain is Succinate--CoA ligase [ADP-forming] subunit beta (397 aa).

The 246-residue stretch at 9–254 (KALLRQYGAP…ETEEDPKELA (246 aa)) folds into the ATP-grasp domain. ATP is bound by residues lysine 46, 53 to 55 (GRG), glutamate 109, serine 112, and glutamate 117. Mg(2+)-binding residues include asparagine 209 and aspartate 223. Residues asparagine 274 and 331–333 (GIM) contribute to the substrate site.

It belongs to the succinate/malate CoA ligase beta subunit family. In terms of assembly, heterotetramer of two alpha and two beta subunits. Requires Mg(2+) as cofactor.

It carries out the reaction succinate + ATP + CoA = succinyl-CoA + ADP + phosphate. The catalysed reaction is GTP + succinate + CoA = succinyl-CoA + GDP + phosphate. The protein operates within carbohydrate metabolism; tricarboxylic acid cycle; succinate from succinyl-CoA (ligase route): step 1/1. Succinyl-CoA synthetase functions in the citric acid cycle (TCA), coupling the hydrolysis of succinyl-CoA to the synthesis of either ATP or GTP and thus represents the only step of substrate-level phosphorylation in the TCA. The beta subunit provides nucleotide specificity of the enzyme and binds the substrate succinate, while the binding sites for coenzyme A and phosphate are found in the alpha subunit. This chain is Succinate--CoA ligase [ADP-forming] subunit beta, found in Paracoccus denitrificans (strain Pd 1222).